A 561-amino-acid chain; its full sequence is Urocanate hydratase (561 aa).

NAD(+) is bound by residues Gly-52–Gly-53, Gln-130, Gly-176–Gly-178, Glu-196, Arg-201, Asn-242–Ala-243, Gln-263–His-267, Tyr-273–Leu-274, and Tyr-322. Cys-410 is a catalytic residue. Gly-492 is an NAD(+) binding site.

Belongs to the urocanase family. Requires NAD(+) as cofactor.

It localises to the cytoplasm. It catalyses the reaction 4-imidazolone-5-propanoate = trans-urocanate + H2O. It participates in amino-acid degradation; L-histidine degradation into L-glutamate; N-formimidoyl-L-glutamate from L-histidine: step 2/3. In terms of biological role, catalyzes the conversion of urocanate to 4-imidazolone-5-propionate. The chain is Urocanate hydratase from Salmonella gallinarum (strain 287/91 / NCTC 13346).